The following is a 64-amino-acid chain: Large ribosomal subunit protein bL35 (64 aa).

It belongs to the bacterial ribosomal protein bL35 family.

This Amoebophilus asiaticus (strain 5a2) protein is Large ribosomal subunit protein bL35.